A 363-amino-acid chain; its full sequence is Peroxidase (363 aa).

Positions 1 to 20 are cleaved as a signal peptide; the sequence is MKLSLLSTFAAVIIGALALP. Residue Gln-21 is modified to Pyrrolidone carboxylic acid. Disulfide bonds link Cys-31–Cys-43, Cys-42–Cys-312, Cys-62–Cys-148, and Cys-276–Cys-341. His-75 serves as the catalytic Proton acceptor. Ca(2+) is bound by residues Asp-76, Gly-94, Asp-96, and Ser-98. Asn-162 is a glycosylation site (N-linked (GlcNAc...) (high mannose) asparagine). His-203 contacts heme b. 5 residues coordinate Ca(2+): Ser-204, Asp-221, Thr-223, Val-226, and Asp-228. Ser-358 is a glycosylation site (O-linked (Man...) serine).

It belongs to the peroxidase family. Ligninase subfamily. Requires Ca(2+) as cofactor. Heme b is required as a cofactor.

Its subcellular location is the secreted. The enzyme catalyses 2 a phenolic donor + H2O2 = 2 a phenolic radical donor + 2 H2O. The protein is Peroxidase (CIP1) of Coprinopsis cinerea (strain Okayama-7 / 130 / ATCC MYA-4618 / FGSC 9003) (Inky cap fungus).